The chain runs to 262 residues: Type III pantothenate kinase (262 aa).

6 to 13 (DVGNTNAV) provides a ligand contact to ATP. Residues Tyr100 and 107–110 (GADR) each bind substrate. Catalysis depends on Asp109, which acts as the Proton acceptor. A K(+)-binding site is contributed by Asp129. Residue Thr132 coordinates ATP. Thr184 serves as a coordination point for substrate.

It belongs to the type III pantothenate kinase family. As to quaternary structure, homodimer. NH4(+) is required as a cofactor. Requires K(+) as cofactor.

The protein localises to the cytoplasm. It carries out the reaction (R)-pantothenate + ATP = (R)-4'-phosphopantothenate + ADP + H(+). The protein operates within cofactor biosynthesis; coenzyme A biosynthesis; CoA from (R)-pantothenate: step 1/5. Functionally, catalyzes the phosphorylation of pantothenate (Pan), the first step in CoA biosynthesis. The chain is Type III pantothenate kinase from Bacillus cytotoxicus (strain DSM 22905 / CIP 110041 / 391-98 / NVH 391-98).